Reading from the N-terminus, the 764-residue chain is Subtilisin-like protease SBT3.1 (764 aa).

Positions methionine 1–serine 32 are cleaved as a signal peptide. A propeptide spans glycine 33–glutamine 120 (activation peptide). The region spanning valine 41–lysine 116 is the Inhibitor I9 domain. Residue asparagine 76 is glycosylated (N-linked (GlcNAc...) asparagine). Residues threonine 124–threonine 610 enclose the Peptidase S8 domain. Catalysis depends on aspartate 156, which acts as the Charge relay system. Asparagine 216 is a glycosylation site (N-linked (GlcNAc...) asparagine). Histidine 230 (charge relay system) is an active-site residue. N-linked (GlcNAc...) asparagine glycosylation is found at asparagine 245 and asparagine 374. The Charge relay system role is filled by serine 541. N-linked (GlcNAc...) asparagine glycosylation is found at asparagine 674, asparagine 711, and asparagine 747.

Belongs to the peptidase S8 family.

The protein resides in the secreted. The sequence is that of Subtilisin-like protease SBT3.1 from Arabidopsis thaliana (Mouse-ear cress).